The primary structure comprises 104 residues: Replication restart protein PriB (104 aa).

The 101-residue stretch at 1 to 101 (MTNRLVLSGT…LHAEQIDLID (101 aa)) folds into the SSB domain.

It belongs to the PriB family. As to quaternary structure, homodimer. Interacts with PriA and DnaT. Component of the replication restart primosome. Primosome assembly occurs via a 'hand-off' mechanism. PriA binds to replication forks, subsequently PriB then DnaT bind; DnaT then displaces ssDNA to generate the helicase loading substrate.

Its function is as follows. Involved in the restart of stalled replication forks, which reloads the replicative helicase on sites other than the origin of replication; the PriA-PriB pathway is the major replication restart pathway. During primosome assembly it facilitates complex formation between PriA and DnaT on DNA; stabilizes PriA on DNA. Stimulates the DNA unwinding activity of PriA helicase. The chain is Replication restart protein PriB from Enterobacter sp. (strain 638).